We begin with the raw amino-acid sequence, 212 residues long: Peptide methionine sulfoxide reductase MsrA (212 aa).

Residue C52 is part of the active site.

It belongs to the MsrA Met sulfoxide reductase family.

The catalysed reaction is L-methionyl-[protein] + [thioredoxin]-disulfide + H2O = L-methionyl-(S)-S-oxide-[protein] + [thioredoxin]-dithiol. It carries out the reaction [thioredoxin]-disulfide + L-methionine + H2O = L-methionine (S)-S-oxide + [thioredoxin]-dithiol. Its function is as follows. Has an important function as a repair enzyme for proteins that have been inactivated by oxidation. Catalyzes the reversible oxidation-reduction of methionine sulfoxide in proteins to methionine. The polypeptide is Peptide methionine sulfoxide reductase MsrA (Salmonella agona (strain SL483)).